Reading from the N-terminus, the 73-residue chain is MARRCDICGKGPLVGNNVSHANNKSKTRSLPNLRSVRATVDGTVKHVRVCTRCLKAGKVVKVAHGASRASARA.

Belongs to the bacterial ribosomal protein bL28 family.

The protein is Large ribosomal subunit protein bL28 of Anaeromyxobacter sp. (strain Fw109-5).